Reading from the N-terminus, the 481-residue chain is MNDNKKLGVIALAGVVISAMLGGGVYNLPQNMAQSASAGAILISWIITGIGIWFIANTFRILAAARPDATTGIYTYGELGFGKFTGFLMAWGYWICNSFANVGYAVLLMDSLNYFFPPYFKGGNNWLSIACGSLVLWIIFFIVLAGVKQASALNVIGTIGKLLPLAIFLLVLLFSFRFSTFFTDFWGLKTVAKVHDTNLGGILPQVKSTMLVTLWVFTGIEGAVVVSGRAKSQKDVSKATFLGFITCLLIYTLLSLLPLGVYSQGEISKMAPPSTAAVLMDLIGNWGSVIMNLGVIIAILSSWLIWTVMLSELPFAAAQSGTFPKIFAKENKNESPSFSLLASTIIMQIILILVHFAGNAWNMMLSITSVMALPCYLVSTLYLFKITYKNENYPTDIFAKRKYAMITAILGSIYGVWLIYAAGINYMLIAIVIYALGIPVFIKARRETSPNEKEFTKVERYFAIVLIILALIGLVYLFKFM.

A run of 13 helical transmembrane segments spans residues 7–27 (LGVI…GVYN), 36–56 (ASAG…WFIA), 87–107 (FLMA…YAVL), 127–147 (LSIA…LAGV), 156–176 (IGTI…LFSF), 208–228 (STML…VVSG), 241–261 (FLGF…PLGV), 289–309 (VIMN…WTVM), 338–358 (FSLL…HFAG), 364–384 (MLSI…LYLF), 401–421 (RKYA…LIYA), 422–442 (AGIN…PVFI), and 461–481 (YFAI…FKFM).

It belongs to the amino acid-polyamine-organocation (APC) superfamily. Basic amino acid/polyamine antiporter (APA) (TC 2.A.3.2) family.

The protein localises to the cell membrane. Could be an amino acid transporter. The protein is Putative amino-acid transporter CPE0389 of Clostridium perfringens (strain 13 / Type A).